The chain runs to 300 residues: N-acetylmannosamine kinase (300 aa).

Residues 5 to 12 (ALDIGGTK) and 132 to 139 (GVGGGIVL) contribute to the ATP site. H156, C166, C168, and C173 together coordinate Zn(2+).

It belongs to the ROK (NagC/XylR) family. NanK subfamily. As to quaternary structure, homodimer.

It carries out the reaction an N-acyl-D-mannosamine + ATP = an N-acyl-D-mannosamine 6-phosphate + ADP + H(+). The protein operates within amino-sugar metabolism; N-acetylneuraminate degradation; D-fructose 6-phosphate from N-acetylneuraminate: step 2/5. In terms of biological role, catalyzes the phosphorylation of N-acetylmannosamine (ManNAc) to ManNAc-6-P. This is N-acetylmannosamine kinase from Haemophilus influenzae (strain PittEE).